The following is a 312-amino-acid chain: Glyoxylate/hydroxypyruvate reductase A (312 aa).

Arginine 227 is an active-site residue. Histidine 275 functions as the Proton donor in the catalytic mechanism.

The protein belongs to the D-isomer specific 2-hydroxyacid dehydrogenase family. GhrA subfamily.

Its subcellular location is the cytoplasm. The catalysed reaction is glycolate + NADP(+) = glyoxylate + NADPH + H(+). It catalyses the reaction (R)-glycerate + NAD(+) = 3-hydroxypyruvate + NADH + H(+). The enzyme catalyses (R)-glycerate + NADP(+) = 3-hydroxypyruvate + NADPH + H(+). Its function is as follows. Catalyzes the NADPH-dependent reduction of glyoxylate and hydroxypyruvate into glycolate and glycerate, respectively. This is Glyoxylate/hydroxypyruvate reductase A from Klebsiella pneumoniae subsp. pneumoniae (strain ATCC 700721 / MGH 78578).